The primary structure comprises 681 residues: RNA polymerase sigma factor RpoD (681 aa).

Disordered stretches follow at residues 1 to 60 (MKKK…ETAK) and 239 to 270 (DDDE…VSEK). Positions 261–270 (EERKKVVSEK) are enriched in basic and acidic residues. Residues 446–516 (MAKSNLRLVV…SRAIADQART (71 aa)) are sigma-70 factor domain-2. An Interaction with polymerase core subunit RpoC motif is present at residues 470–473 (DLIQ). The tract at residues 525–601 (DTINRINKVM…DKNIVSSIDH (77 aa)) is sigma-70 factor domain-3. The tract at residues 614-668 (VLDQLNEREKAVIRMRFGLLDDESDRTLEEIGKELNVTRERVRQIESSAIKKLRS) is sigma-70 factor domain-4. The H-T-H motif DNA-binding region spans 641 to 660 (LEEIGKELNVTRERVRQIES).

It belongs to the sigma-70 factor family. RpoD/SigA subfamily. In terms of assembly, interacts transiently with the RNA polymerase catalytic core.

It localises to the cytoplasm. Functionally, sigma factors are initiation factors that promote the attachment of RNA polymerase to specific initiation sites and are then released. This sigma factor is the primary sigma factor during exponential growth. This is RNA polymerase sigma factor RpoD from Helicobacter pylori (strain J99 / ATCC 700824) (Campylobacter pylori J99).